A 107-amino-acid chain; its full sequence is Large ribosomal subunit protein P1 (107 aa).

Over residues 67–82 (PTATSAAAAPAAGEAS) the composition is skewed to low complexity. The interval 67 to 107 (PTATSAAAAPAAGEASGKAEEKKKEEPEEEGDDDMGFGLFD) is disordered. The span at 83–92 (GKAEEKKKEE) shows a compositional bias: basic and acidic residues.

It belongs to the eukaryotic ribosomal protein P1/P2 family. As to quaternary structure, P1 and P2 exist as dimers at the large ribosomal subunit.

Functionally, plays an important role in the elongation step of protein synthesis. The chain is Large ribosomal subunit protein P1 from Leishmania peruviana.